Consider the following 171-residue polypeptide: MIGILNRWRQFGRRYFWPHLLLGMVAASLGLPTSLNDSQDITSLPNSSSSVSRQNNVSLSLTDLVALKEAHRRSSYSVDYWHQHAIRTVIRHLSFALTTPQTVNAQQADELEPHSLVLLDTLNALLTQDSQYPLVISPRAGRVTFYPQAHHQVGIWLAQIRGIRAGPSLLS.

A signal peptide spans 1-36 (MIGILNRWRQFGRRYFWPHLLLGMVAASLGLPTSLN).

It belongs to the SecM family.

The protein resides in the cytoplasm. The protein localises to the cytosol. Its subcellular location is the periplasm. Functionally, regulates secA expression by translational coupling of the secM secA operon. Translational pausing at a specific Pro residue 5 residues before the end of the protein may allow disruption of a mRNA repressor helix that normally suppresses secA translation initiation. This Pectobacterium carotovorum subsp. carotovorum (strain PC1) protein is Secretion monitor.